The chain runs to 86 residues: Small ribosomal subunit protein bS20 (86 aa).

Residues 1-11 (MANIKSAKKRA) are compositionally biased toward basic residues. Positions 1 to 26 (MANIKSAKKRAITSEKNRQHNASRRS) are disordered.

Belongs to the bacterial ribosomal protein bS20 family.

Its function is as follows. Binds directly to 16S ribosomal RNA. The polypeptide is Small ribosomal subunit protein bS20 (Pseudoalteromonas translucida (strain TAC 125)).